Consider the following 267-residue polypeptide: MAALTPSRSVFASTCKTIAQQCSRRPVAVQQLAAVPVARQVSSSSAVQQEQDASGTSSSQQPRPRWSYTPERMKGPGFSLNLVKDPRRKQWMVNSDPAKLDAFYDAFLGQGGSRMLSEETKWLAVTHKSFDYGRRGYNTRLAFLGRQIIALETTRSILTSPVLNEPIVDKYGRTPYNHAALANIDKLIYTQPLDIMDKTKIARMGIDFGLLTVMRWKPRMPEDLESSGVVVVLNSTLFAIIGAISLEKGAAVAQRIVREKILKRLGA.

The span at 43 to 54 shows a compositional bias: low complexity; the sequence is SSSAVQQEQDAS. Residues 43–73 form a disordered region; the sequence is SSSAVQQEQDASGTSSSQQPRPRWSYTPERM.

Belongs to the ribonuclease III family. Mitochondrion-specific ribosomal protein mL57 subfamily. In terms of assembly, component of the mitochondrial large ribosomal subunit (mt-LSU). Mature N.crassa 74S mitochondrial ribosomes consist of a small (37S) and a large (54S) subunit. The 37S small subunit contains a 16S ribosomal RNA (16S mt-rRNA) and 32 different proteins. The 54S large subunit contains a 23S rRNA (23S mt-rRNA) and 42 different proteins. mL57 forms a heterodimer with mL44 and stabilizes rRNA expansion segments 1/2 at a membrane-facing protuberance close to the point of attachment of the ribosome to the translocon in the membrane.

It localises to the mitochondrion. Its function is as follows. Component of the mitochondrial ribosome (mitoribosome), a dedicated translation machinery responsible for the synthesis of mitochondrial genome-encoded proteins, including at least some of the essential transmembrane subunits of the mitochondrial respiratory chain. The mitoribosomes are attached to the mitochondrial inner membrane and translation products are cotranslationally integrated into the membrane. This is Large ribosomal subunit protein mL57 (mrpl15) from Neurospora crassa (strain ATCC 24698 / 74-OR23-1A / CBS 708.71 / DSM 1257 / FGSC 987).